The primary structure comprises 898 residues: Protein translocase subunit SecA (898 aa).

ATP contacts are provided by residues glutamine 87, 105–109 (GEGKT), and aspartate 512. Positions 855 to 865 (MQYQNNEGTSS) are enriched in polar residues. Residues 855 to 898 (MQYQNNEGTSSLHEKSEHKIGRNESCPCGSGKKYKHCHGSKAKY) form a disordered region. Basic and acidic residues predominate over residues 866-876 (LHEKSEHKIGR). Zn(2+)-binding residues include cysteine 880, cysteine 882, cysteine 891, and histidine 892. Over residues 886-898 (KKYKHCHGSKAKY) the composition is skewed to basic residues.

The protein belongs to the SecA family. Monomer and homodimer. Part of the essential Sec protein translocation apparatus which comprises SecA, SecYEG and auxiliary proteins SecDF-YajC and YidC. Requires Zn(2+) as cofactor.

The protein resides in the cell inner membrane. Its subcellular location is the cytoplasm. It catalyses the reaction ATP + H2O + cellular proteinSide 1 = ADP + phosphate + cellular proteinSide 2.. In terms of biological role, part of the Sec protein translocase complex. Interacts with the SecYEG preprotein conducting channel. Has a central role in coupling the hydrolysis of ATP to the transfer of proteins into and across the cell membrane, serving both as a receptor for the preprotein-SecB complex and as an ATP-driven molecular motor driving the stepwise translocation of polypeptide chains across the membrane. The chain is Protein translocase subunit SecA from Histophilus somni (strain 2336) (Haemophilus somnus).